Consider the following 84-residue polypeptide: Putative antitoxin RelB4 (84 aa).

Its function is as follows. Antitoxin component of a type II toxin-antitoxin (TA) system. Its cognate toxin is RelE4 (Potential). The polypeptide is Putative antitoxin RelB4 (relB4) (Methanocaldococcus jannaschii (strain ATCC 43067 / DSM 2661 / JAL-1 / JCM 10045 / NBRC 100440) (Methanococcus jannaschii)).